The sequence spans 425 residues: Riboflavin biosynthesis protein RibBA (425 aa).

The DHBP synthase stretch occupies residues 1–204; it reads MTRLDSVERA…IADLIEWRRK (204 aa). D-ribulose 5-phosphate-binding positions include 28 to 29, Asp-33, 141 to 145, and Glu-165; these read RE and RPGHT. Glu-29 contributes to the Mg(2+) binding site. Position 144 (His-144) interacts with Mg(2+). The GTP cyclohydrolase II stretch occupies residues 205–425; that stretch reads HEKHIERVAE…HLPGEFGGAL (221 aa). 259–263 contacts GTP; it reads RVHSE. The Zn(2+) site is built by Cys-264, Cys-275, and Cys-277. Residues Gln-280, 303–305, and Thr-325 each bind GTP; that span reads EGR. Catalysis depends on Asp-337, which acts as the Proton acceptor; for GTP cyclohydrolase activity. Residue Arg-339 is the Nucleophile; for GTP cyclohydrolase activity of the active site. Residues Thr-360 and Lys-365 each contribute to the GTP site.

It in the N-terminal section; belongs to the DHBP synthase family. In the C-terminal section; belongs to the GTP cyclohydrolase II family. Requires Mg(2+) as cofactor. Mn(2+) serves as cofactor. The cofactor is Zn(2+).

The enzyme catalyses D-ribulose 5-phosphate = (2S)-2-hydroxy-3-oxobutyl phosphate + formate + H(+). It catalyses the reaction GTP + 4 H2O = 2,5-diamino-6-hydroxy-4-(5-phosphoribosylamino)-pyrimidine + formate + 2 phosphate + 3 H(+). The protein operates within cofactor biosynthesis; riboflavin biosynthesis; 2-hydroxy-3-oxobutyl phosphate from D-ribulose 5-phosphate: step 1/1. It functions in the pathway cofactor biosynthesis; riboflavin biosynthesis; 5-amino-6-(D-ribitylamino)uracil from GTP: step 1/4. In terms of biological role, catalyzes the conversion of D-ribulose 5-phosphate to formate and 3,4-dihydroxy-2-butanone 4-phosphate. Catalyzes the conversion of GTP to 2,5-diamino-6-ribosylamino-4(3H)-pyrimidinone 5'-phosphate (DARP), formate and pyrophosphate. This is Riboflavin biosynthesis protein RibBA from Mycobacterium ulcerans (strain Agy99).